A 356-amino-acid chain; its full sequence is Probable dual-specificity RNA methyltransferase RlmN (356 aa).

The active-site Proton acceptor is glutamate 97. The Radical SAM core domain maps to 103–333 (YHHGNSVCIS…VTIRREMGSD (231 aa)). A disulfide bridge links cysteine 110 with cysteine 338. Residues cysteine 117, cysteine 121, and cysteine 124 each coordinate [4Fe-4S] cluster. S-adenosyl-L-methionine-binding positions include 164 to 165 (GE), serine 196, 219 to 221 (SLH), and asparagine 295. Residue cysteine 338 is the S-methylcysteine intermediate of the active site.

The protein belongs to the radical SAM superfamily. RlmN family. [4Fe-4S] cluster serves as cofactor.

Its subcellular location is the cytoplasm. The enzyme catalyses adenosine(2503) in 23S rRNA + 2 reduced [2Fe-2S]-[ferredoxin] + 2 S-adenosyl-L-methionine = 2-methyladenosine(2503) in 23S rRNA + 5'-deoxyadenosine + L-methionine + 2 oxidized [2Fe-2S]-[ferredoxin] + S-adenosyl-L-homocysteine. The catalysed reaction is adenosine(37) in tRNA + 2 reduced [2Fe-2S]-[ferredoxin] + 2 S-adenosyl-L-methionine = 2-methyladenosine(37) in tRNA + 5'-deoxyadenosine + L-methionine + 2 oxidized [2Fe-2S]-[ferredoxin] + S-adenosyl-L-homocysteine. In terms of biological role, specifically methylates position 2 of adenine 2503 in 23S rRNA and position 2 of adenine 37 in tRNAs. This is Probable dual-specificity RNA methyltransferase RlmN from Lachnoclostridium phytofermentans (strain ATCC 700394 / DSM 18823 / ISDg) (Clostridium phytofermentans).